A 340-amino-acid chain; its full sequence is MVREEVAVSTRTLQWKCVESRTDSNRLYYGRFVLSPLMKGQADTIGIAMRKALLGEIEGTCITRAKSEKVPHEYSTIVGIEESVHEILMNLKEIVLKSNLYGTRDASICVRGPKYVTAQDIISPPSVEIVDTTQHIASLTEPINLCIELQIERDRGYRMKAPNNYQDGSYPIDAVSMPVRNANHSIHSYGSGNEKQEILFLEIWTNGSLTPKEALHEASRNLIDLFIPFLHAEEQDIHLNLEDNQNRFTVSPFTLHDRLGNIRKNKKEIALKCIFIDQSELPTRTYNCLKRSNIHTLLDLLNNSQEDLMRIEHFRIEDIKQILDILQKHFGIDLPKNKRF.

Residues 1–233 (MVREEVAVST…DLFIPFLHAE (233 aa)) form an alpha N-terminal domain (alpha-NTD) region. The interval 266–340 (KKEIALKCIF…GIDLPKNKRF (75 aa)) is alpha C-terminal domain (alpha-CTD).

This sequence belongs to the RNA polymerase alpha chain family. As to quaternary structure, in plastids the minimal PEP RNA polymerase catalytic core is composed of four subunits: alpha, beta, beta', and beta''. When a (nuclear-encoded) sigma factor is associated with the core the holoenzyme is formed, which can initiate transcription.

Its subcellular location is the plastid. The protein resides in the chloroplast. It catalyses the reaction RNA(n) + a ribonucleoside 5'-triphosphate = RNA(n+1) + diphosphate. DNA-dependent RNA polymerase catalyzes the transcription of DNA into RNA using the four ribonucleoside triphosphates as substrates. This chain is DNA-directed RNA polymerase subunit alpha, found in Calycanthus floridus var. glaucus (Eastern sweetshrub).